Consider the following 130-residue polypeptide: Large ribosomal subunit protein bL12 (130 aa).

This sequence belongs to the bacterial ribosomal protein bL12 family. In terms of assembly, homodimer. Part of the ribosomal stalk of the 50S ribosomal subunit. Forms a multimeric L10(L12)X complex, where L10 forms an elongated spine to which 2 to 4 L12 dimers bind in a sequential fashion. Binds GTP-bound translation factors.

In terms of biological role, forms part of the ribosomal stalk which helps the ribosome interact with GTP-bound translation factors. Is thus essential for accurate translation. This Mycolicibacterium paratuberculosis (strain ATCC BAA-968 / K-10) (Mycobacterium paratuberculosis) protein is Large ribosomal subunit protein bL12.